Consider the following 215-residue polypeptide: tRNA (guanine-N(7)-)-methyltransferase (215 aa).

Positions 43, 68, 95, and 121 each coordinate S-adenosyl-L-methionine. Aspartate 121 is an active-site residue. Substrate contacts are provided by lysine 125 and aspartate 157.

The protein belongs to the class I-like SAM-binding methyltransferase superfamily. TrmB family.

The enzyme catalyses guanosine(46) in tRNA + S-adenosyl-L-methionine = N(7)-methylguanosine(46) in tRNA + S-adenosyl-L-homocysteine. Its pathway is tRNA modification; N(7)-methylguanine-tRNA biosynthesis. In terms of biological role, catalyzes the formation of N(7)-methylguanine at position 46 (m7G46) in tRNA. This chain is tRNA (guanine-N(7)-)-methyltransferase, found in Trichormus variabilis (strain ATCC 29413 / PCC 7937) (Anabaena variabilis).